Reading from the N-terminus, the 496-residue chain is MHAKSLTELRAALAAKECSAVELAQLYLKRIEAARDLNAFVHVDADLTLAQAKAADAELARGAGGALTGLPIAHKDVFVTRGWHSTAGSKMLANYESPFDATVVARLQAAGMVTLGKTNMDEFAMGSSNENSAFGAVKNPWDTNAVPGGSSGGSSAAVAARLAPAATGTDTGGSIRQPASFAGVTGIKPTYGRVSRYGMIAFASSLDQGGPMAQSASDCALLLNAMAGFDERDSTSLEREDEDFTRHLGQPWAAGNDAGKPLAGLRIGLPNEYFGDGLADDVRATIDAALKQYEALGATLVPVSLPKTELSIPVYYVIAPAEASSNLSRFDGVRFGHRAAQYGDLLDMYKKSRAEGFGPEVKRRILVGAYVLSHGYYDAYYLQAQKIRRIIANDFQEAFKSCDVIMGPASPTVAWDLGSKGDDPVQMYLADIYTLSVSLAGLPGMSVPCGFGAGANAKRPVGLQIIGNYFNEARMLQVADAFQRATDWHKQVPAGV.

Catalysis depends on charge relay system residues Lys-75 and Ser-150. The Acyl-ester intermediate role is filled by Ser-174.

Belongs to the amidase family. GatA subfamily. Heterotrimer of A, B and C subunits.

It catalyses the reaction L-glutamyl-tRNA(Gln) + L-glutamine + ATP + H2O = L-glutaminyl-tRNA(Gln) + L-glutamate + ADP + phosphate + H(+). Allows the formation of correctly charged Gln-tRNA(Gln) through the transamidation of misacylated Glu-tRNA(Gln) in organisms which lack glutaminyl-tRNA synthetase. The reaction takes place in the presence of glutamine and ATP through an activated gamma-phospho-Glu-tRNA(Gln). This is Glutamyl-tRNA(Gln) amidotransferase subunit A from Burkholderia lata (strain ATCC 17760 / DSM 23089 / LMG 22485 / NCIMB 9086 / R18194 / 383).